Here is a 231-residue protein sequence, read N- to C-terminus: Aminodeoxyfutalosine nucleosidase (231 aa).

The Proton acceptor role is filled by E14. Substrate contacts are provided by residues G81, V155, and M175–E176. Catalysis depends on D199, which acts as the Proton donor.

Belongs to the PNP/UDP phosphorylase family. In terms of assembly, homodimer.

The catalysed reaction is 6-amino-6-deoxyfutalosine + H2O = dehypoxanthine futalosine + adenine. It catalyses the reaction S-adenosyl-L-homocysteine + H2O = S-(5-deoxy-D-ribos-5-yl)-L-homocysteine + adenine. The enzyme catalyses S-methyl-5'-thioadenosine + H2O = 5-(methylsulfanyl)-D-ribose + adenine. It carries out the reaction 5'-deoxyadenosine + H2O = 5-deoxy-D-ribose + adenine. It functions in the pathway quinol/quinone metabolism; menaquinone biosynthesis. The protein operates within amino-acid biosynthesis; L-methionine biosynthesis via salvage pathway; S-methyl-5-thio-alpha-D-ribose 1-phosphate from S-methyl-5'-thioadenosine (hydrolase route): step 1/2. Functionally, catalyzes the direct conversion of aminodeoxyfutalosine (AFL) into dehypoxanthine futalosine (DHFL) and adenine via the hydrolysis of the N-glycosidic bond; this reaction seems to represent an essential step in the menaquinone biosynthesis pathway in Helicobacter species. Can also probably catalyzes the hydrolysis of 5'-methylthioadenosine (MTA) and S-adenosylhomocysteine (SAH) to adenine and the corresponding thioribose, 5'-methylthioribose and S-ribosylhomocysteine, respectively. These other activities highlight the tremendous versatility of the enzyme, which also plays key roles in S-adenosylmethionine recycling and in the biosynthesis of the quorum-sensing molecule autoinducer-2. Does not act on futalosine (FL) as substrate. The sequence is that of Aminodeoxyfutalosine nucleosidase (mtnN) from Helicobacter pylori (strain ATCC 700392 / 26695) (Campylobacter pylori).